A 149-amino-acid chain; its full sequence is Histone H2A (149 aa).

Residues 1 to 23 (METAGKAKKGFGGRKGGPRKKSV) are compositionally biased toward basic residues. 2 disordered regions span residues 1 to 25 (META…SVTR) and 127 to 149 (KTAE…PKKA). Over residues 127 to 138 (KTAEKAAKEPKS) the composition is skewed to basic and acidic residues. 2 consecutive short sequence motifs (SPKK motif) follow at residues 138-141 (SPSK) and 145-148 (SPKK).

Belongs to the histone H2A family. As to quaternary structure, the nucleosome is a histone octamer containing two molecules each of H2A, H2B, H3 and H4 assembled in one H3-H4 heterotetramer and two H2A-H2B heterodimers. The octamer wraps approximately 147 bp of DNA.

It is found in the nucleus. It localises to the chromosome. In terms of biological role, core component of nucleosome. Nucleosomes wrap and compact DNA into chromatin, limiting DNA accessibility to the cellular machineries which require DNA as a template. Histones thereby play a central role in transcription regulation, DNA repair, DNA replication and chromosomal stability. DNA accessibility is regulated via a complex set of post-translational modifications of histones, also called histone code, and nucleosome remodeling. This chain is Histone H2A, found in Petroselinum crispum (Parsley).